Here is a 912-residue protein sequence, read N- to C-terminus: Transcription factor bHLH140 (912 aa).

The tract at residues 1 to 57 (MDDFNLRSENPNSSSTTSSSSSSFHRHKSETGNTKRSRSTSTLSTDPQSVAARDRRH) is disordered. Over residues 13 to 23 (SSSTTSSSSSS) the composition is skewed to low complexity. Positions 43–92 (LSTDPQSVAARDRRHRISDRFKILQSMVPGGAKMDTVSMLDEAISYVKFL) constitute a bHLH domain. 234 to 241 (GPPGSGKS) contributes to the ATP binding site. The 180-residue stretch at 511 to 690 (KAKASQKNID…KYKGSQDKAV (180 aa)) folds into the Macro domain. Polar residues predominate over residues 657–666 (PKRSSQTAVS). Residues 657 to 706 (PKRSSQTAVSDSGEDIKEDSERNKKYKGSQDKAVTNNLESESLEDTRGSG) form a disordered region. Positions 720–829 (LHSIAMHPER…SQDFNSDSLK (110 aa)) constitute an HIT domain. Residues 870-893 (LRCNRCRSAHPNIPKLKSHVRSCH) form a C2H2-type zinc finger.

In terms of assembly, homodimer.

Its subcellular location is the nucleus. The protein is Transcription factor bHLH140 (BHLH140) of Arabidopsis thaliana (Mouse-ear cress).